A 186-amino-acid polypeptide reads, in one-letter code: Meiotically up-regulated gene 163 protein (186 aa).

Its subcellular location is the mitochondrion. In terms of biological role, has a role in meiosis. The protein is Meiotically up-regulated gene 163 protein (mug163) of Schizosaccharomyces pombe (strain 972 / ATCC 24843) (Fission yeast).